Reading from the N-terminus, the 245-residue chain is Polyhedrin (245 aa).

This sequence belongs to the polyhedrin family.

In terms of biological role, major component of the virus occlusion bodies, which are large proteinaceous structures (polyhedra), that protect the virus from the outside environment for extended periods until they are ingested by insect larvae. This is Polyhedrin (PH) from Hyphantria cunea nuclear polyhedrosis virus (HcNPV).